Here is a 384-residue protein sequence, read N- to C-terminus: 1-deoxy-D-xylulose 5-phosphate reductoisomerase (384 aa).

Positions 10, 11, 12, 13, 38, and 120 each coordinate NADPH. Lys-121 is a binding site for 1-deoxy-D-xylulose 5-phosphate. Glu-122 contacts NADPH. Asp-146 contacts Mn(2+). Ser-147, Glu-148, Ser-172, and His-195 together coordinate 1-deoxy-D-xylulose 5-phosphate. Glu-148 provides a ligand contact to Mn(2+). Gly-201 provides a ligand contact to NADPH. Positions 208, 213, 214, and 217 each coordinate 1-deoxy-D-xylulose 5-phosphate. Glu-217 lines the Mn(2+) pocket.

The protein belongs to the DXR family. The cofactor is Mg(2+). Mn(2+) is required as a cofactor.

It catalyses the reaction 2-C-methyl-D-erythritol 4-phosphate + NADP(+) = 1-deoxy-D-xylulose 5-phosphate + NADPH + H(+). The protein operates within isoprenoid biosynthesis; isopentenyl diphosphate biosynthesis via DXP pathway; isopentenyl diphosphate from 1-deoxy-D-xylulose 5-phosphate: step 1/6. Its function is as follows. Catalyzes the NADPH-dependent rearrangement and reduction of 1-deoxy-D-xylulose-5-phosphate (DXP) to 2-C-methyl-D-erythritol 4-phosphate (MEP). This chain is 1-deoxy-D-xylulose 5-phosphate reductoisomerase, found in Protochlamydia amoebophila (strain UWE25).